The primary structure comprises 354 residues: Serum paraoxonase/arylesterase 2 (354 aa).

C42 and C352 form a disulfide bridge. Residues E53 and D54 each contribute to the Ca(2+) site. H114 acts as the Proton acceptor in catalysis. Ca(2+)-binding residues include I116, N167, D168, and N223. Residue N254 is glycosylated (N-linked (GlcNAc...) asparagine). Ca(2+) is bound by residues D268 and N269. N-linked (GlcNAc...) asparagine glycans are attached at residues N269 and N323.

This sequence belongs to the paraoxonase family. As to quaternary structure, homotrimer. The cofactor is Ca(2+). In terms of processing, glycosylated. Post-translationally, the signal sequence is not cleaved.

The protein resides in the membrane. It carries out the reaction a phenyl acetate + H2O = a phenol + acetate + H(+). The enzyme catalyses an N-acyl-L-homoserine lactone + H2O = an N-acyl-L-homoserine + H(+). Capable of hydrolyzing lactones and a number of aromatic carboxylic acid esters. In Rattus norvegicus (Rat), this protein is Serum paraoxonase/arylesterase 2 (Pon2).